A 54-amino-acid polypeptide reads, in one-letter code: UPF0391 membrane protein Pnap_0920 (54 aa).

Helical transmembrane passes span 6–26 (VVFL…IAAG) and 30–50 (IAKI…VVSL).

It belongs to the UPF0391 family.

It is found in the cell membrane. In Polaromonas naphthalenivorans (strain CJ2), this protein is UPF0391 membrane protein Pnap_0920.